The sequence spans 741 residues: MASTSSLALSQALLARAISHHGSDQRGSLPAFSGLKSTGSRASASSRRRIAQSMTKNRSLRPLVRAAAVETVEPTTDSSIVDKSVNSIRFLAIDAVEKAKSGHPGLPMGCAPMAHILYDEVMRYNPKNPYWFNRDRFVLSAGHGCMLLYALLHLAGYDSVQEEDLKQFRQWGSKTPGHPENFETPGIEVTTGPLGQGIANAVGLALAEKHLAARFNKPDAEVVDHYTYAILGDGCQMEGISNEACSLAGHWGLGKLIAFYDDNHISIDGDTEIAFTENVDQRFEALGWHVIWVKNGNTGYDEIRAAIKEAKTVTDKPTLIKVTTTIGYGSPNKANSYSVHGAALGEKEVEATRNNLGWPYEPFQVPDDVKSHWSRHTPEGATLESDWSAKFAAYEKKYPEEASELKSIITGELPAGWEKALPTYTPESPGDATRNLSQQCLNALAKVVPGFLGGSADLASSNMTLLKAFGDFQKATPEERNLRFGVREHGMGAICNGIALHSPGLIPYCATFFVFTDYMRGAMRISALSEAGVIYVMTHDSIGLGEDGPTHQPIEHIASFRAMPNTLMFRPADGNETAGAYKIAVTKRKTPSILALSRQKLPHLPGTSIEGVEKGGYTISDDSSGNKPDVILIGTGSELEIAAQAAEVLRKDGKTVRVVSFVCWELFDEQSDEYKESVLPSDVSARVSIEAASTFGWGKIVGGKGKSIGINSFGASAPAPLLYKEFGITVEAVVDAAKSFF.

The N-terminal 66 residues, 1-66 (MASTSSLALS…NRSLRPLVRA (66 aa)), are a transit peptide targeting the chloroplast. The segment at 22–51 (GSDQRGSLPAFSGLKSTGSRASASSRRRIA) is disordered. Ala-67 is subject to N-acetylalanine. His-103 is a substrate binding site. Residues His-143 and 192-194 (GPL) each bind thiamine diphosphate. Position 233 (Asp-233) interacts with Mg(2+). The thiamine diphosphate site is built by Gly-234 and Asn-263. Mg(2+) is bound by residues Asn-263 and Ile-265. His-340 lines the substrate pocket. His-340 provides a ligand contact to thiamine diphosphate. Ser-428 bears the Phosphoserine mark. Residues Arg-434 and Ser-461 each coordinate substrate. Positions 488 and 515 each coordinate thiamine diphosphate. Catalysis depends on Glu-488, which acts as the Proton donor. His-539, Asp-547, and Arg-598 together coordinate substrate.

This sequence belongs to the transketolase family. Homodimer. The cofactor is Mg(2+). Requires Ca(2+) as cofactor. Mn(2+) is required as a cofactor. Co(2+) serves as cofactor. It depends on thiamine diphosphate as a cofactor.

It is found in the plastid. Its subcellular location is the chloroplast stroma. It catalyses the reaction D-sedoheptulose 7-phosphate + D-glyceraldehyde 3-phosphate = aldehydo-D-ribose 5-phosphate + D-xylulose 5-phosphate. Its pathway is carbohydrate biosynthesis; Calvin cycle. Functionally, catalyzes the reversible transfer of a two-carbon ketol group from fructose-6-phosphate or sedoheptulose-7-phosphate to glyceraldehyde-3-phosphate to yield xylulose-5-phosphate and erythrose-4-phosphate or ribose-5-phosphate, respectively. Could act as a stress sensor involved in adaptation process. This is Transketolase-1, chloroplastic (TKL-1) from Arabidopsis thaliana (Mouse-ear cress).